An 848-amino-acid chain; its full sequence is DNA mismatch repair protein MutS (848 aa).

605 to 612 (GPNMAGKS) contributes to the ATP binding site.

The protein belongs to the DNA mismatch repair MutS family.

Its function is as follows. This protein is involved in the repair of mismatches in DNA. It is possible that it carries out the mismatch recognition step. This protein has a weak ATPase activity. This chain is DNA mismatch repair protein MutS, found in Leptospira borgpetersenii serovar Hardjo-bovis (strain JB197).